We begin with the raw amino-acid sequence, 226 residues long: ATP synthase subunit a (226 aa).

A run of 6 helical transmembrane segments spans residues 17–37 (FSYF…AMMA), 79–99 (LVAT…IPGF), 105–125 (SLNL…FEGI), 134–154 (FAHF…IEIV), 176–196 (LFLM…AYVL), and 199–219 (FMAF…LAGA).

This sequence belongs to the ATPase A chain family. As to quaternary structure, F-type ATPases have 2 components, CF(1) - the catalytic core - and CF(0) - the membrane proton channel. CF(1) has five subunits: alpha(3), beta(3), gamma(1), delta(1), epsilon(1). CF(0) has three main subunits: a(1), b(2) and c(9-12). The alpha and beta chains form an alternating ring which encloses part of the gamma chain. CF(1) is attached to CF(0) by a central stalk formed by the gamma and epsilon chains, while a peripheral stalk is formed by the delta and b chains.

Its subcellular location is the cell inner membrane. Key component of the proton channel; it plays a direct role in the translocation of protons across the membrane. The chain is ATP synthase subunit a from Campylobacter jejuni subsp. jejuni serotype O:23/36 (strain 81-176).